We begin with the raw amino-acid sequence, 201 residues long: Lipopolysaccharide core heptose(II)-phosphate phosphatase (201 aa).

Positions 1-35 (MLAFTLRFIKNKRYLATLAGALVIIAGLTSQHAWS) are cleaved as a signal peptide.

The protein belongs to the phosphoglycerate mutase family. Ais subfamily.

The protein localises to the periplasm. Its pathway is bacterial outer membrane biogenesis; lipopolysaccharide metabolism. In terms of biological role, catalyzes the dephosphorylation of heptose(II) of the outer membrane lipopolysaccharide core. The sequence is that of Lipopolysaccharide core heptose(II)-phosphate phosphatase from Salmonella schwarzengrund (strain CVM19633).